We begin with the raw amino-acid sequence, 512 residues long: Proline--tRNA ligase (512 aa).

Residues Ser-460–Asp-470 are compositionally biased toward acidic residues. The interval Ser-460–Asn-484 is disordered.

This sequence belongs to the class-II aminoacyl-tRNA synthetase family. ProS type 3 subfamily. As to quaternary structure, homodimer.

Its subcellular location is the cytoplasm. It catalyses the reaction tRNA(Pro) + L-proline + ATP = L-prolyl-tRNA(Pro) + AMP + diphosphate. In terms of biological role, catalyzes the attachment of proline to tRNA(Pro) in a two-step reaction: proline is first activated by ATP to form Pro-AMP and then transferred to the acceptor end of tRNA(Pro). The polypeptide is Proline--tRNA ligase (Haloquadratum walsbyi (strain DSM 16790 / HBSQ001)).